An 84-amino-acid polypeptide reads, in one-letter code: Toxin Acra3 (84 aa).

An N-terminal signal peptide occupies residues 1–17 (MKIIFLVLMMILSEVYS). The 64-residue stretch at 19-82 (RDGYPVHDGT…VYGDDGIFCK (64 aa)) folds into the LCN-type CS-alpha/beta domain. 4 cysteine pairs are disulfide-bonded: C30–C81, C34–C57, C43–C62, and C47–C64. The residue at position 83 (S83) is a Serine amide.

Belongs to the long (4 C-C) scorpion toxin superfamily. Sodium channel inhibitor family. Beta subfamily. As to expression, expressed by the venom gland.

It is found in the secreted. In terms of biological role, toxin with unknown target. In vivo, induces severe neurotoxic events in mice such as excitability and convulsions, leading to the death of the animals within a few minutes after injection. Exerts very strong cytotoxic effect on a mouse brain tumor cell line (BC3H1) (IC(50)=5 mg/ml). It exerts its effects by inducing a stronger necrosis than apoptosis in BC3H1 cells. The polypeptide is Toxin Acra3 (Androctonus crassicauda (Arabian fat-tailed scorpion)).